Consider the following 273-residue polypeptide: Cell division protein FtsQ (273 aa).

At 1 to 20 (MPPRKAHTTRRTPAKKSGVR) the chain is on the cytoplasmic side. A helical transmembrane segment spans residues 21-43 (RRLLRLLVTGVPVLALCGVAWLW). Over 44-273 (LESVRLTRIE…STQKSAMGHE (230 aa)) the chain is Periplasmic. A POTRA domain is found at 47–115 (VRLTRIEIVG…GTLRIAVEER (69 aa)).

The protein belongs to the FtsQ/DivIB family. FtsQ subfamily.

Its subcellular location is the cell inner membrane. In terms of biological role, essential cell division protein. This is Cell division protein FtsQ from Rhodothermus marinus (strain ATCC 43812 / DSM 4252 / R-10) (Rhodothermus obamensis).